Here is a 357-residue protein sequence, read N- to C-terminus: Zinc finger protein 830 (357 aa).

A C2H2-type zinc finger spans residues Cys47 to His69. Disordered stretches follow at residues Arg98–Pro126, Asp157–Leu194, and Ala231–Gln255. A compositionally biased stretch (basic and acidic residues) spans Lys99–Glu115. Over residues Asp157–Asn168 the composition is skewed to acidic residues. Basic and acidic residues predominate over residues Ala242 to Gln255. Positions Ala279–Lys325 form a coiled coil.

Its subcellular location is the nucleus. The protein resides in the chromosome. It is found in the nucleus speckle. In terms of biological role, may act as an important regulator of the cell cycle that participates in the maintenance of genome integrity. This Xenopus tropicalis (Western clawed frog) protein is Zinc finger protein 830.